The sequence spans 526 residues: Microphthalmia-associated transcription factor (526 aa).

A disordered region spans residues 1 to 54; that stretch reads MQSESGIVPDFEVGEEFHEEPKTYYELKSQPLKSSSSAEHPGASKPPISSSSMT. S5 is modified (phosphoserine; by MTOR). Residues 15-25 are compositionally biased toward basic and acidic residues; it reads EEFHEEPKTYY. Residues 41–54 show a composition bias toward low complexity; the sequence is PGASKPPISSSSMT. Position 180 is a phosphoserine; by MAPK (S180). The transactivation stretch occupies residues 224–295; sequence DDVIDDIISL…PNIKRELTAC (72 aa). The residue at position 280 (S280) is a Phosphoserine; by MARK3. A Glycyl lysine isopeptide (Lys-Gly) (interchain with G-Cter in SUMO) cross-link involves residue K289. The region spanning 311–364 is the bHLH domain; the sequence is QKKDNHNLIERRRRFNINDRIKELGTLIPKSNDPDMRWNKGTILKASVDYIRKL. Positions 355-402 form a coiled coil; sequence KASVDYIRKLQREQQRAKELENRQKKLEHANRHLLLRIQELEMQARAH. Residues 374-395 form a leucine-zipper region; the sequence is LENRQKKLEHANRHLLLRIQEL. A DNA-binding regulation region spans residues 401–431; that stretch reads AHGLSLIPSTGLCSPDLVNRIIKQEPVLENC. A Phosphoserine; by GSK3 modification is found at S405. Phosphoserine is present on S414. K423 is covalently cross-linked (Glycyl lysine isopeptide (Lys-Gly) (interchain with G-Cter in SUMO)). S491 carries the phosphoserine modification. Residues 496 to 526 are disordered; sequence TDPLLSSVSPGASKTSSRRSSMSMEETEHTC. Polar residues predominate over residues 499-509; the sequence is LLSSVSPGASK. Residue S516 is modified to Phosphoserine; by RPS6KA1.

The protein belongs to the MiT/TFE family. In terms of assembly, homodimer or heterodimer; dimerization is mediated via the coiled coil region. Efficient DNA binding requires dimerization with another bHLH protein. Binds DNA in the form of homodimer or heterodimer with either TFE3, TFEB or TFEC. Interacts with small GTPases Rag (RagA/RRAGA, RagB/RRAGB, RagC/RRAGC and/or RagD/RRAGD); promoting its recruitment to lysosomal membrane in the presence of nutrients. Interacts with KARS1. Identified in a complex with HINT1 and CTNNB1. Interacts with VSX2. Post-translationally, when nutrients are present, phosphorylation by MTOR at Ser-5 via non-canonical mTORC1 pathway promotes ubiquitination by the SCF(BTRC) complex, followed by degradation. Phosphorylation at Ser-405 significantly enhances the ability to bind the tyrosinase promoter. Phosphorylation by MARK3/cTAK1 at Ser-280 promotes association with 14-3-3/YWHA adapters and retention in the cytosol. Phosphorylated at Ser-180 and Ser-516 following KIT signaling, triggering a short live activation: Phosphorylation at Ser-180 and Ser-516 by MAPK and RPS6KA1, respectively, activate the transcription factor activity but also promote ubiquitination and subsequent degradation by the proteasome. Phosphorylated in response to blue light (415nm). In terms of processing, ubiquitinated by the SCF(BTRC) and SCF(FBXW11) complexes following phosphorylation ar Ser-5 by MTOR, leading to its degradation by the proteasome. Ubiquitinated following phosphorylation at Ser-180, leading to subsequent degradation by the proteasome. Deubiquitinated by USP13, preventing its degradation. In terms of tissue distribution, expressed in melanocytes (at protein level). As to expression, expressed in the retinal pigment epithelium, brain, and placenta. Expressed in the kidney. Expressed in the kidney and retinal pigment epithelium. In terms of tissue distribution, expressed in the kidney. As to expression, expressed in melanocytes.

It localises to the nucleus. Its subcellular location is the cytoplasm. It is found in the lysosome membrane. Transcription factor that acts as a master regulator of melanocyte survival and differentiation as well as melanosome biogenesis. Binds to M-boxes (5'-TCATGTG-3') and symmetrical DNA sequences (E-boxes) (5'-CACGTG-3') found in the promoter of pigmentation genes, such as tyrosinase (TYR). Involved in the cellular response to amino acid availability by acting downstream of MTOR: in the presence of nutrients, MITF phosphorylation by MTOR promotes its inactivation. Upon starvation or lysosomal stress, inhibition of MTOR induces MITF dephosphorylation, resulting in transcription factor activity. Plays an important role in melanocyte development by regulating the expression of tyrosinase (TYR) and tyrosinase-related protein 1 (TYRP1). Plays a critical role in the differentiation of various cell types, such as neural crest-derived melanocytes, mast cells, osteoclasts and optic cup-derived retinal pigment epithelium. This is Microphthalmia-associated transcription factor from Homo sapiens (Human).